The chain runs to 200 residues: UPF0316 protein SAUSA300_1892 (200 aa).

The next 3 helical transmembrane spans lie at 8–28 (PWLMVLTIFIINICYVTFLTM), 40–60 (IAASVSFLEVLVYIVGLGLVM), and 66–86 (IQNIIAYAFGFSIGIIVGMKI).

It belongs to the UPF0316 family.

Its subcellular location is the cell membrane. This is UPF0316 protein SAUSA300_1892 from Staphylococcus aureus (strain USA300).